Reading from the N-terminus, the 626-residue chain is Glutamine--fructose-6-phosphate aminotransferase [isomerizing] (626 aa).

Residue Cys-2 is the Nucleophile; for GATase activity of the active site. The Glutamine amidotransferase type-2 domain maps to 2 to 222 (CGIVGYIGPQ…NGELARLTPT (221 aa)). SIS domains lie at 293–441 (LPPS…QRQS) and 471–616 (YIEA…VDQP). Catalysis depends on Lys-621, which acts as the For Fru-6P isomerization activity.

In terms of assembly, homodimer.

Its subcellular location is the cytoplasm. It carries out the reaction D-fructose 6-phosphate + L-glutamine = D-glucosamine 6-phosphate + L-glutamate. Its function is as follows. Catalyzes the first step in hexosamine metabolism, converting fructose-6P into glucosamine-6P using glutamine as a nitrogen source. This chain is Glutamine--fructose-6-phosphate aminotransferase [isomerizing], found in Thermosynechococcus vestitus (strain NIES-2133 / IAM M-273 / BP-1).